The following is a 243-amino-acid chain: 23S rRNA (guanosine-2'-O-)-methyltransferase RlmB (243 aa).

S-adenosyl-L-methionine is bound by residues glycine 196, isoleucine 216, and leucine 225.

This sequence belongs to the class IV-like SAM-binding methyltransferase superfamily. RNA methyltransferase TrmH family. RlmB subfamily. As to quaternary structure, homodimer.

It localises to the cytoplasm. The enzyme catalyses guanosine(2251) in 23S rRNA + S-adenosyl-L-methionine = 2'-O-methylguanosine(2251) in 23S rRNA + S-adenosyl-L-homocysteine + H(+). Its function is as follows. Specifically methylates the ribose of guanosine 2251 in 23S rRNA. The chain is 23S rRNA (guanosine-2'-O-)-methyltransferase RlmB from Salmonella typhimurium (strain LT2 / SGSC1412 / ATCC 700720).